A 421-amino-acid chain; its full sequence is PDZ and LIM domain protein 7 (421 aa).

The PDZ domain maps to 1-85; that stretch reads MEEYKVTLDG…KLGLVLSRFA (85 aa). Positions 115–193 are disordered; the sequence is IARPFGSGTP…STGPAVRPPW (79 aa). A compositionally biased stretch (polar residues) spans 147-172; the sequence is YPSSQMPQGQLQNGQKSRTVSNVSGK. LIM zinc-binding domains are found at residues 244-302, 303-362, and 363-421; these read PVCS…ARFA, PNCA…MFGT, and KCRG…FSNV.

The protein localises to the cytoplasm. Its subcellular location is the cytoskeleton. May function as a scaffold on which the coordinated assembly of proteins can occur. May play a role as an adapter that, via its PDZ domain, localizes LIM-binding proteins to actin filaments of both skeletal muscle and nonmuscle tissues. This is PDZ and LIM domain protein 7 (pdlim7) from Xenopus laevis (African clawed frog).